The following is a 549-amino-acid chain: Cation/acetate symporter ActP (549 aa).

At M1–N32 the chain is on the periplasmic side. Residues W33–K55 traverse the membrane as a helical segment. Residues R56 to N75 lie on the Cytoplasmic side of the membrane. The helical transmembrane segment at G76 to T98 threads the bilayer. Over S99–D102 the chain is Periplasmic. A helical membrane pass occupies residues G103–L125. At R126 to P145 the chain is on the cytoplasmic side. A helical membrane pass occupies residues I146–G168. Residues A169–H182 are Periplasmic-facing. Residues I183 to T205 form a helical membrane-spanning segment. Residues W206 to K211 are Cytoplasmic-facing. A helical transmembrane segment spans residues A212–F234. The Periplasmic portion of the chain corresponds to N235 to D260. The chain crosses the membrane as a helical span at residues P261 to M283. The Cytoplasmic portion of the chain corresponds to R284–T302. Residues G303–A325 traverse the membrane as a helical segment. Over N326–N349 the chain is Periplasmic. The chain crosses the membrane as a helical span at residues A350–V372. Residues A373 to E401 lie on the Cytoplasmic side of the membrane. The chain crosses the membrane as a helical span at residues L402–E424. Over N425–N427 the chain is Periplasmic. A helical transmembrane segment spans residues I428–S450. The Cytoplasmic segment spans residues M451–A461. A helical transmembrane segment spans residues M462–V484. Residues Q485–I493 lie on the Periplasmic side of the membrane. A helical transmembrane segment spans residues F494–A516. The Cytoplasmic segment spans residues T517–H549.

Belongs to the sodium:solute symporter (SSF) (TC 2.A.21) family.

Its subcellular location is the cell inner membrane. Transports acetate. This chain is Cation/acetate symporter ActP (actP), found in Shigella flexneri.